The following is a 77-amino-acid chain: MSANGNAALGVRLTEDQVKVLEENFTKVSKHPDETTLMLIAAECGLSEEQTAVWFRMRNAQWRKAEGLPAELGSVKD.

Residues 7 to 65 (AALGVRLTEDQVKVLEENFTKVSKHPDETTLMLIAAECGLSEEQTAVWFRMRNAQWRKA) constitute a DNA-binding region (homeobox; degenerate).

It is found in the nucleus. Its subcellular location is the cytoplasm. Its function is as follows. Atypical homeodomain protein which does not bind DNA and is required to modulate cardiac growth and development. May act via an interaction with SRF, leading to modulate the expression of SRF-dependent cardiac-specific genes and cardiac development. May act as a co-chaperone for HSPA1A and HSPA1B chaperone proteins and assist in chaperone-mediated protein refolding. This Danio rerio (Zebrafish) protein is Homeodomain-only protein (hopx).